Consider the following 206-residue polypeptide: Urease accessory protein UreG (206 aa).

Residue 14-21 participates in GTP binding; sequence GPVGSGKT.

It belongs to the SIMIBI class G3E GTPase family. UreG subfamily. Homodimer. UreD, UreF and UreG form a complex that acts as a GTP-hydrolysis-dependent molecular chaperone, activating the urease apoprotein by helping to assemble the nickel containing metallocenter of UreC. The UreE protein probably delivers the nickel.

Its subcellular location is the cytoplasm. Functionally, facilitates the functional incorporation of the urease nickel metallocenter. This process requires GTP hydrolysis, probably effectuated by UreG. This is Urease accessory protein UreG from Brucella anthropi (strain ATCC 49188 / DSM 6882 / CCUG 24695 / JCM 21032 / LMG 3331 / NBRC 15819 / NCTC 12168 / Alc 37) (Ochrobactrum anthropi).